We begin with the raw amino-acid sequence, 769 residues long: Elongation factor G, mitochondrial (769 aa).

A mitochondrion-targeting transit peptide spans 1–42 (MSKFLRGISSISSASLKARASNFGVFHGVCSARNLHQSRLCL). In terms of domain architecture, tr-type G spans 74 to 356 (TRLRNIGVSA…AVVDYLPQPN (283 aa)). GTP is bound by residues 83–90 (AHIDSGKT), 154–158 (DTPGH), and 208–211 (NKMD).

It belongs to the TRAFAC class translation factor GTPase superfamily. Classic translation factor GTPase family. EF-G/EF-2 subfamily.

The protein resides in the mitochondrion. It participates in protein biosynthesis; polypeptide chain elongation. In terms of biological role, mitochondrial GTPase that catalyzes the GTP-dependent ribosomal translocation step during translation elongation. During this step, the ribosome changes from the pre-translocational (PRE) to the post-translocational (POST) state as the newly formed A-site-bound peptidyl-tRNA and P-site-bound deacylated tRNA move to the P and E sites, respectively. Catalyzes the coordinated movement of the two tRNA molecules, the mRNA and conformational changes in the ribosome. The protein is Elongation factor G, mitochondrial of Debaryomyces hansenii (strain ATCC 36239 / CBS 767 / BCRC 21394 / JCM 1990 / NBRC 0083 / IGC 2968) (Yeast).